Consider the following 93-residue polypeptide: Neutrophil cationic peptide 1 type B (93 aa).

The first 19 residues, 1-19, serve as a signal peptide directing secretion; sequence MRTVPLFAACLLLTLMAQA. Residues 20 to 62 constitute a propeptide that is removed on maturation; it reads EPLPRAADHSDTKMKGDREDHVAVISFWEEESTSLQDAGAGAG. Cystine bridges form between C65-C93, C67-C82, and C72-C92.

The protein belongs to the alpha-defensin family. As to expression, bone marrow.

It is found in the secreted. Functionally, has antibiotic, anti-fungi and antiviral activity. The polypeptide is Neutrophil cationic peptide 1 type B (Cavia porcellus (Guinea pig)).